Consider the following 170-residue polypeptide: Lipoprotein signal peptidase (170 aa).

3 helical membrane passes run 12-32, 67-87, and 93-113; these read WYWV…WVLA, WQRW…TVWL, and SLWK…GNLI. Residues Asp-123 and Asp-141 contribute to the active site. The chain crosses the membrane as a helical span at residues 137 to 157; it reads FNIADSAIFIGAVLIIWDSFF.

It belongs to the peptidase A8 family.

Its subcellular location is the cell inner membrane. The enzyme catalyses Release of signal peptides from bacterial membrane prolipoproteins. Hydrolyzes -Xaa-Yaa-Zaa-|-(S,diacylglyceryl)Cys-, in which Xaa is hydrophobic (preferably Leu), and Yaa (Ala or Ser) and Zaa (Gly or Ala) have small, neutral side chains.. Its pathway is protein modification; lipoprotein biosynthesis (signal peptide cleavage). This protein specifically catalyzes the removal of signal peptides from prolipoproteins. The protein is Lipoprotein signal peptidase of Shewanella sp. (strain MR-4).